The sequence spans 132 residues: Iron-sulfur cluster assembly 1 homolog, mitochondrial (132 aa).

Residues 1 to 15 constitute a mitochondrion transit peptide; it reads MASSASSVVRATVRA. Residues Cys60, Cys124, and Cys126 each contribute to the Fe cation site.

It belongs to the HesB/IscA family. In terms of assembly, homooligomer, forming a rod-shaped structure 24 nm in length that may arise through a double-helical assembly of subunits. Interacts with CRY4; CRY4 seems to be associated with the outside of the rod-shaped homooligomer. Does not interact with CRY1 or CRY2. In terms of tissue distribution, detected in retina, especially in the retinal ganglion layer, the inner nuclear layer and the outer nuclear layer. Detected in retina visual pigment cells (at protein level).

The protein resides in the mitochondrion. Involved in the maturation of mitochondrial 4Fe-4S proteins functioning late in the iron-sulfur cluster assembly pathway. Probably involved in the binding of an intermediate of Fe/S cluster assembly. Component of a putative magnetoreceptor complex formed by ISCA1 and CRY4, a member of the cryptochrome family that are known to be required for light-dependent magnetosensitivity in various orgnisms. The rod-like assembly may facilitate the perception of the Earth's weak magnetic field. Both ISCA1 and the complex with CRY4 have magnetic properties and are attracted to iron beads. When exposed to a magnetic field of 1 mT (superior to the natural magnetic field), over 50% of the rod-like complexes align more or less in parallel with the magnetic field at room temperature. The sequence is that of Iron-sulfur cluster assembly 1 homolog, mitochondrial (ISCA1) from Columba livia (Rock dove).